The chain runs to 729 residues: Zorya protein ZorA (729 aa).

Helical transmembrane passes span 20 to 40, 135 to 155, and 177 to 197; these read PATV…FYFF, LPGI…MIGL, and VLYA…ITWL.

It belongs to the MotA family.

The protein localises to the cell inner membrane. Its function is as follows. Component of antiviral defense system Zorya type I, composed of ZorA, ZorB, ZorC and ZorD. Expression of Zorya type I in E.coli (strain MG1655) confers 10,000-fold resistance to phage SECphi27, 100-fold resistance to lambda, and 10-fold resistance to T7. While most T7 infected Zorya-containing cells undergo abortive infection, a minority produce viable phage progeny. These eventually accumulate to a high multiplicity of infection, leading to culture collapse by 2 hours after initial infection. ZorA and ZorB probably assemble in the cell inner membrane and exert their effect there. This Escherichia coli O139:H28 (strain E24377A / ETEC) protein is Zorya protein ZorA.